A 593-amino-acid chain; its full sequence is Aspartate--tRNA ligase (593 aa).

Glu180 is a binding site for L-aspartate. Positions 204 to 207 (QIFK) are aspartate. Arg226 contacts L-aspartate. ATP-binding positions include 226 to 228 (RDE) and Gln235. His453 is a binding site for L-aspartate. Glu487 serves as a coordination point for ATP. Arg494 contributes to the L-aspartate binding site. ATP is bound at residue 539-542 (GLDR).

The protein belongs to the class-II aminoacyl-tRNA synthetase family. Type 1 subfamily. Homodimer.

It is found in the cytoplasm. It carries out the reaction tRNA(Asp) + L-aspartate + ATP = L-aspartyl-tRNA(Asp) + AMP + diphosphate. Functionally, catalyzes the attachment of L-aspartate to tRNA(Asp) in a two-step reaction: L-aspartate is first activated by ATP to form Asp-AMP and then transferred to the acceptor end of tRNA(Asp). In Clostridium botulinum (strain Loch Maree / Type A3), this protein is Aspartate--tRNA ligase.